We begin with the raw amino-acid sequence, 559 residues long: Proton-coupled zinc antiporter SLC30A9, mitochondrial (559 aa).

Positions 58 to 96 (SSDQKEDGGSKGTSAASSPEKSMAGLDPSKPEQKSTFPP) are disordered. 5 helical membrane passes run 230-250 (VVIV…LAWV), 305-325 (GVGI…IGLL), 333-353 (LLWA…TLLV), 389-409 (AAAV…SLTG), and 415-435 (SLGS…LIYT). An LXXLL motif motif is present at residues 453–457 (LTELL).

It belongs to the cation diffusion facilitator (CDF) transporter (TC 2.A.4) family. SLC30A subfamily.

It localises to the mitochondrion membrane. It is found in the nucleus. The protein resides in the endoplasmic reticulum. The enzyme catalyses Zn(2+)(in) + 2 H(+)(out) = Zn(2+)(out) + 2 H(+)(in). Mitochondrial proton-coupled zinc ion antiporter mediating the export of zinc from the mitochondria and involved in zinc homeostasis, zinc mobilization as well as mitochondrial morphology and health. In nucleus, may function as a secondary coactivator for nuclear receptors. This is Proton-coupled zinc antiporter SLC30A9, mitochondrial (slc30a9) from Xenopus laevis (African clawed frog).